Reading from the N-terminus, the 266-residue chain is MPASFPLLAVDIGNTSTVLGLADESLSLTHTWRIRTNRDLLPDDLALQLHGLFTLAGAPMPRAAVLSSVAPPLGANYAFALRRHFRVDAFEVAAENLPDVTVELDQPGSIGADRLCNLFGAERYLDAYEYAVVVDFGTSTNFDVIARGRRFLGGILATGAQVSADALFARAAKLPRITLEAPARAIGQNTVHALQSGLVFGYAEMVDGLLRRVRAELPAPAVAIATGGFARTIEGICREIDFYDETLTLRGLVELWASREAVGKGL.

ATP is bound at residue 11-18; that stretch reads DIGNTSTV. A substrate-binding site is contributed by 111 to 114; the sequence is GADR. The active-site Proton acceptor is the aspartate 113. Residue aspartate 135 coordinates K(+). Threonine 138 contributes to the ATP binding site. Residue threonine 190 coordinates substrate.

It belongs to the type III pantothenate kinase family. In terms of assembly, homodimer. NH4(+) is required as a cofactor. The cofactor is K(+).

The protein localises to the cytoplasm. The catalysed reaction is (R)-pantothenate + ATP = (R)-4'-phosphopantothenate + ADP + H(+). The protein operates within cofactor biosynthesis; coenzyme A biosynthesis; CoA from (R)-pantothenate: step 1/5. In terms of biological role, catalyzes the phosphorylation of pantothenate (Pan), the first step in CoA biosynthesis. This Deinococcus geothermalis (strain DSM 11300 / CIP 105573 / AG-3a) protein is Type III pantothenate kinase.